Consider the following 117-residue polypeptide: uncharacterized protein (117 aa).

Residues 4–26 (VLNFHFSYIYTYFITITTNYKYG) traverse the membrane as a helical segment.

Its subcellular location is the host membrane. This is an uncharacterized protein from Sulfolobus islandicus rod-shaped virus 1 (SIRV-1).